Consider the following 362-residue polypeptide: Small ribosomal subunit protein uS4m (362 aa).

Residues 105 to 179 enclose the S4 RNA-binding domain; that stretch reads TRFDVILLRL…FYKEILVEKI (75 aa).

It belongs to the universal ribosomal protein uS4 family. In terms of assembly, component of the mitochondrial ribosome small subunit.

The protein localises to the mitochondrion. This Arabidopsis thaliana (Mouse-ear cress) protein is Small ribosomal subunit protein uS4m (RPS4).